We begin with the raw amino-acid sequence, 469 residues long: Dihydroorotate dehydrogenase (quinone), mitochondrial (469 aa).

A mitochondrion-targeting transit peptide spans 1-37; the sequence is MSSSAAALAWRRSLRDALLRGSAWRGAPAANSAAARL. A helical transmembrane segment spans residues 62–82; that stretch reads LLTGAMIGLAIAGGAYVSTAD. Residues 150-154 and serine 174 each bind FMN; that span reads AGFDK. Lysine 154 contributes to the substrate binding site. Residue 199 to 203 coordinates substrate; sequence NRCGF. Positions 219 to 247 are disordered; sequence HGKRKMEETSSSTSPTTSDVKQGGKAGPG. Low complexity predominate over residues 227–236; it reads TSSSTSPTTS. Positions 252 and 283 each coordinate FMN. 283–288 is a substrate binding site; the sequence is NVSSPN. Serine 286 functions as the Nucleophile in the catalytic mechanism. 2 residues coordinate FMN: lysine 328 and serine 356. Substrate is bound at residue 357–358; sequence NT. FMN is bound by residues glycine 380, glycine 409, and 430-431; that span reads YT.

The protein belongs to the dihydroorotate dehydrogenase family. Type 2 subfamily. Requires FMN as cofactor.

It is found in the mitochondrion inner membrane. It carries out the reaction (S)-dihydroorotate + a quinone = orotate + a quinol. Its pathway is pyrimidine metabolism; UMP biosynthesis via de novo pathway; orotate from (S)-dihydroorotate (quinone route): step 1/1. In terms of biological role, catalyzes the conversion of dihydroorotate to orotate with quinone as electron acceptor. In Oryza sativa subsp. japonica (Rice), this protein is Dihydroorotate dehydrogenase (quinone), mitochondrial (PYRD).